A 115-amino-acid polypeptide reads, in one-letter code: Large ribosomal subunit protein bL19 (115 aa).

Belongs to the bacterial ribosomal protein bL19 family.

In terms of biological role, this protein is located at the 30S-50S ribosomal subunit interface and may play a role in the structure and function of the aminoacyl-tRNA binding site. The sequence is that of Large ribosomal subunit protein bL19 (rplS) from Buchnera aphidicola subsp. Acyrthosiphon pisum (strain APS) (Acyrthosiphon pisum symbiotic bacterium).